Reading from the N-terminus, the 435-residue chain is AP-2 complex subunit mu (435 aa).

Ser45 is subject to Phosphoserine. Position 156 is a phosphothreonine (Thr156). In terms of domain architecture, MHD spans 170 to 434; that stretch reads RNELFLDVLE…IGRSGIYETR (265 aa). Residues Lys341, Lys345, and Lys354 each coordinate a 1,2-diacyl-sn-glycero-3-phospho-(1D-myo-inositol-3,4,5-trisphosphate).

The protein belongs to the adaptor complexes medium subunit family. Adaptor protein complex 2 (AP-2) is a heterotetramer composed of two large adaptins (alpha-type subunit AP2A1 or AP2A2 and beta-type subunit AP2B1), a medium adaptin (mu-type subunit AP2M1) and a small adaptin (sigma-type subunit AP2S1). Interacts with ATP6V1H and MEGF10. Interacts with EGFR and TTGN1. Interacts with F2R. Interacts with PIP5K1C; tyrosine phosphorylation of PIP5K1C weakens the interaction. Interacts with KIAA0319; required for clathrin-mediated endocytosis of KIAA0319. Interacts with DVL2 (via DEP domain). Interacts with KCNQ1; mediates estrogen-induced internalization via clathrin-coated vesicles. Interacts with P2RX4 (via internalization motif). Together with AP2A1 or AP2A2 and AP2B1, it interacts with ADAM10; this interaction facilitates ADAM10 endocytosis from the plasma membrane during long-term potentiation in hippocampal neurons. Probably interacts with ACE2 (via endocytic sorting signal motif); the interaction is inhibited by ACE2 phosphorylation. Interacts with RALBP1; the interaction is direct. Interacts with TMEM106B (via N-terminus). In terms of processing, phosphorylation at Thr-156 increases the affinity of the AP-2 complex for cargo membrane proteins during the initial stages of endocytosis.

It is found in the cell membrane. The protein resides in the membrane. The protein localises to the coated pit. Component of the adaptor protein complex 2 (AP-2). Adaptor protein complexes function in protein transport via transport vesicles in different membrane traffic pathways. Adaptor protein complexes are vesicle coat components and appear to be involved in cargo selection and vesicle formation. AP-2 is involved in clathrin-dependent endocytosis in which cargo proteins are incorporated into vesicles surrounded by clathrin (clathrin-coated vesicles, CCVs) which are destined for fusion with the early endosome. The clathrin lattice serves as a mechanical scaffold but is itself unable to bind directly to membrane components. Clathrin-associated adaptor protein (AP) complexes which can bind directly to both the clathrin lattice and to the lipid and protein components of membranes are considered to be the major clathrin adaptors contributing the CCV formation. AP-2 also serves as a cargo receptor to selectively sort the membrane proteins involved in receptor-mediated endocytosis. AP-2 seems to play a role in the recycling of synaptic vesicle membranes from the presynaptic surface. AP-2 recognizes Y-X-X-[FILMV] (Y-X-X-Phi) and [ED]-X-X-X-L-[LI] endocytosis signal motifs within the cytosolic tails of transmembrane cargo molecules. AP-2 may also play a role in maintaining normal post-endocytic trafficking through the ARF6-regulated, non-clathrin pathway. During long-term potentiation in hippocampal neurons, AP-2 is responsible for the endocytosis of ADAM10. The AP-2 mu subunit binds to transmembrane cargo proteins; it recognizes the Y-X-X-Phi motifs. The surface region interacting with to the Y-X-X-Phi motif is inaccessible in cytosolic AP-2, but becomes accessible through a conformational change following phosphorylation of AP-2 mu subunit at Thr-156 in membrane-associated AP-2. The membrane-specific phosphorylation event appears to involve assembled clathrin which activates the AP-2 mu kinase AAK1. Plays a role in endocytosis of frizzled family members upon Wnt signaling. This chain is AP-2 complex subunit mu (AP2M1), found in Bos taurus (Bovine).